Reading from the N-terminus, the 78-residue chain is Omega-conotoxin-like Ac6.5 (78 aa).

A signal peptide spans 1–22 (MKLTCVVIVAVLLLTACQLLTA). A propeptide spanning residues 23–42 (DDSRGTQKHRSLRSTTKVSK) is cleaved from the precursor. Intrachain disulfides connect Cys46–Cys62, Cys53–Cys65, and Cys61–Cys72. 2 positions are modified to 4-hydroxyproline: Pro55 and Pro67.

It belongs to the conotoxin O1 superfamily. Expressed by the venom duct.

The protein localises to the secreted. Functionally, omega-conotoxins act at presynaptic membranes, they bind and block voltage-gated calcium channels (Cav). The chain is Omega-conotoxin-like Ac6.5 from Conus achatinus (Little frog cone).